A 395-amino-acid chain; its full sequence is Elongation factor Tu (395 aa).

Residues 10 to 205 (KVHMNVGTIG…TMDEYFKDPV (196 aa)) form the tr-type G domain. The tract at residues 19-26 (GHVDHGKT) is G1. 19–26 (GHVDHGKT) lines the GTP pocket. Mg(2+) is bound at residue Thr26. Residues 60 to 64 (GITIN) are G2. A G3 region spans residues 81–84 (DCPG). GTP-binding positions include 81–85 (DCPGH) and 136–139 (NKVD). The segment at 136–139 (NKVD) is G4. The tract at residues 173 to 175 (SAF) is G5.

The protein belongs to the TRAFAC class translation factor GTPase superfamily. Classic translation factor GTPase family. EF-Tu/EF-1A subfamily. In terms of assembly, monomer.

The protein resides in the cytoplasm. The enzyme catalyses GTP + H2O = GDP + phosphate + H(+). In terms of biological role, GTP hydrolase that promotes the GTP-dependent binding of aminoacyl-tRNA to the A-site of ribosomes during protein biosynthesis. This Treponema denticola (strain ATCC 35405 / DSM 14222 / CIP 103919 / JCM 8153 / KCTC 15104) protein is Elongation factor Tu.